The chain runs to 74 residues: DNA-directed RNA polymerase subunit omega (74 aa).

This sequence belongs to the RNA polymerase subunit omega family. The RNAP catalytic core consists of 2 alpha, 1 beta, 1 beta' and 1 omega subunit. When a sigma factor is associated with the core the holoenzyme is formed, which can initiate transcription.

It catalyses the reaction RNA(n) + a ribonucleoside 5'-triphosphate = RNA(n+1) + diphosphate. In terms of biological role, promotes RNA polymerase assembly. Latches the N- and C-terminal regions of the beta' subunit thereby facilitating its interaction with the beta and alpha subunits. This Lactobacillus acidophilus (strain ATCC 700396 / NCK56 / N2 / NCFM) protein is DNA-directed RNA polymerase subunit omega.